Reading from the N-terminus, the 338-residue chain is DNA-directed RNA polymerase subunit alpha (338 aa).

Positions M1 to N225 are alpha N-terminal domain (alpha-NTD). Residues Y242–E338 form an alpha C-terminal domain (alpha-CTD) region. Positions F314–E338 are disordered.

This sequence belongs to the RNA polymerase alpha chain family. As to quaternary structure, homodimer. The RNAP catalytic core consists of 2 alpha, 1 beta, 1 beta' and 1 omega subunit. When a sigma factor is associated with the core the holoenzyme is formed, which can initiate transcription.

The catalysed reaction is RNA(n) + a ribonucleoside 5'-triphosphate = RNA(n+1) + diphosphate. Functionally, DNA-dependent RNA polymerase catalyzes the transcription of DNA into RNA using the four ribonucleoside triphosphates as substrates. The polypeptide is DNA-directed RNA polymerase subunit alpha (Corynebacterium diphtheriae (strain ATCC 700971 / NCTC 13129 / Biotype gravis)).